The sequence spans 681 residues: DNA ligase (681 aa).

Residues 45 to 49 (DFDFD), 94 to 95 (SL), and E120 contribute to the NAD(+) site. Catalysis depends on K122, which acts as the N6-AMP-lysine intermediate. NAD(+) is bound by residues R143, E177, K289, and K313. Zn(2+)-binding residues include C403, C406, C421, and C426. A BRCT domain is found at 593 to 681 (SDQQPFAGQS…SLKINFKNTI (89 aa)).

Belongs to the NAD-dependent DNA ligase family. LigA subfamily. Mg(2+) serves as cofactor. Requires Mn(2+) as cofactor.

The catalysed reaction is NAD(+) + (deoxyribonucleotide)n-3'-hydroxyl + 5'-phospho-(deoxyribonucleotide)m = (deoxyribonucleotide)n+m + AMP + beta-nicotinamide D-nucleotide.. DNA ligase that catalyzes the formation of phosphodiester linkages between 5'-phosphoryl and 3'-hydroxyl groups in double-stranded DNA using NAD as a coenzyme and as the energy source for the reaction. It is essential for DNA replication and repair of damaged DNA. This chain is DNA ligase, found in Leptospira borgpetersenii serovar Hardjo-bovis (strain L550).